Reading from the N-terminus, the 132-residue chain is MSMQDPIADMFTRIRNGLSAEKEFVSVPFSKIKMEIANFLVNEGYIKSCSKGTTSMGHPSIEIELKYHAGAPVIEMIKRVSRPSLRIYKSHADLPKVYGGYGVAIVSTSKGLVSDRKARDLGVGGEIIGYVA.

The protein belongs to the universal ribosomal protein uS8 family. As to quaternary structure, part of the 30S ribosomal subunit. Contacts proteins S5 and S12.

Functionally, one of the primary rRNA binding proteins, it binds directly to 16S rRNA central domain where it helps coordinate assembly of the platform of the 30S subunit. The protein is Small ribosomal subunit protein uS8 of Francisella tularensis subsp. holarctica (strain FTNF002-00 / FTA).